The sequence spans 483 residues: Protein nucleotidyltransferase YdiU (483 aa).

Residues Gly81, Gly83, Arg84, Lys103, Asp115, Gly116, Arg166, and Arg173 each coordinate ATP. Asp244 acts as the Proton acceptor in catalysis. Mg(2+)-binding residues include Asn245 and Asp254. Position 254 (Asp254) interacts with ATP.

The protein belongs to the SELO family. Requires Mg(2+) as cofactor. Mn(2+) serves as cofactor.

It catalyses the reaction L-seryl-[protein] + ATP = 3-O-(5'-adenylyl)-L-seryl-[protein] + diphosphate. The enzyme catalyses L-threonyl-[protein] + ATP = 3-O-(5'-adenylyl)-L-threonyl-[protein] + diphosphate. The catalysed reaction is L-tyrosyl-[protein] + ATP = O-(5'-adenylyl)-L-tyrosyl-[protein] + diphosphate. It carries out the reaction L-histidyl-[protein] + UTP = N(tele)-(5'-uridylyl)-L-histidyl-[protein] + diphosphate. It catalyses the reaction L-seryl-[protein] + UTP = O-(5'-uridylyl)-L-seryl-[protein] + diphosphate. The enzyme catalyses L-tyrosyl-[protein] + UTP = O-(5'-uridylyl)-L-tyrosyl-[protein] + diphosphate. Functionally, nucleotidyltransferase involved in the post-translational modification of proteins. It can catalyze the addition of adenosine monophosphate (AMP) or uridine monophosphate (UMP) to a protein, resulting in modifications known as AMPylation and UMPylation. The protein is Protein nucleotidyltransferase YdiU of Shewanella halifaxensis (strain HAW-EB4).